A 165-amino-acid polypeptide reads, in one-letter code: Nucleotide-binding protein LBF_1338 (165 aa).

It belongs to the YajQ family.

Functionally, nucleotide-binding protein. The protein is Nucleotide-binding protein LBF_1338 of Leptospira biflexa serovar Patoc (strain Patoc 1 / Ames).